The primary structure comprises 584 residues: Putative adenine deaminase BA_3032/GBAA_3032/BAS2818 (584 aa).

This sequence belongs to the metallo-dependent hydrolases superfamily. Adenine deaminase family.

It catalyses the reaction adenine + H2O + H(+) = hypoxanthine + NH4(+). In Bacillus anthracis, this protein is Putative adenine deaminase BA_3032/GBAA_3032/BAS2818.